The chain runs to 248 residues: Coenzyme F420:L-glutamate ligase (248 aa).

Residues 15-18 (IPLI), 45-46 (ET), and Lys50 each bind GTP. Residue Asp115 participates in a divalent metal cation binding. Asn118 contacts GTP. A divalent metal cation is bound by residues Asp155, Ser156, and Gln213. GTP is bound at residue 211–218 (MGQSDEGI).

The protein belongs to the CofE family. Homodimer. Mg(2+) is required as a cofactor. Requires Mn(2+) as cofactor. K(+) serves as cofactor.

The enzyme catalyses oxidized coenzyme F420-0 + GTP + L-glutamate = oxidized coenzyme F420-1 + GDP + phosphate + H(+). It carries out the reaction oxidized coenzyme F420-1 + GTP + L-glutamate = oxidized coenzyme F420-2 + GDP + phosphate + H(+). The protein operates within cofactor biosynthesis; coenzyme F420 biosynthesis. In terms of biological role, catalyzes the GTP-dependent successive addition of two or more gamma-linked L-glutamates to the L-lactyl phosphodiester of 7,8-didemethyl-8-hydroxy-5-deazariboflavin (F420-0) to form coenzyme F420-0-glutamyl-glutamate (F420-2) or polyglutamated F420 derivatives. This is Coenzyme F420:L-glutamate ligase from Methanococcus maripaludis (strain C6 / ATCC BAA-1332).